A 225-amino-acid polypeptide reads, in one-letter code: MQRKIKSYVLRAGRISNRQQQGLDLWLEDYELKFDSPSPWNFAKEFGRHDADTIVEIGFGMGTSLFTMAMNNPQCNYLGIEVHKAGVGSLVADLHEHQITNVRVVVHDAVDVLQTKIPENSLAGVQIFFPDPWHKKRHHKRRLIQSEFIQMLVKKIRPSGFIHCATDWEDYAEHILNVLSSESALFNQQKEGGYSPRPDSRPLTKFEQRGERLGHGVWDLVFIKK.

S-adenosyl-L-methionine-binding residues include E56, E81, D108, and D131. The active site involves D131. Residues K135, D167, and 204 to 207 (TKFE) each bind substrate.

Belongs to the class I-like SAM-binding methyltransferase superfamily. TrmB family.

It carries out the reaction guanosine(46) in tRNA + S-adenosyl-L-methionine = N(7)-methylguanosine(46) in tRNA + S-adenosyl-L-homocysteine. Its pathway is tRNA modification; N(7)-methylguanine-tRNA biosynthesis. Functionally, catalyzes the formation of N(7)-methylguanine at position 46 (m7G46) in tRNA. This Legionella pneumophila (strain Corby) protein is tRNA (guanine-N(7)-)-methyltransferase.